The chain runs to 138 residues: Large ribosomal subunit protein uL16 (138 aa).

Basic residues predominate over residues 1-16 (MLIPKRVKFRRQHRPN). A disordered region spans residues 1–25 (MLIPKRVKFRRQHRPNRSGMSKGGN).

It belongs to the universal ribosomal protein uL16 family. Part of the 50S ribosomal subunit.

Binds 23S rRNA and is also seen to make contacts with the A and possibly P site tRNAs. The chain is Large ribosomal subunit protein uL16 from Corynebacterium urealyticum (strain ATCC 43042 / DSM 7109).